A 323-amino-acid chain; its full sequence is tRNA U34 carboxymethyltransferase (323 aa).

Residues Lys-91, Trp-105, Lys-110, Gly-130, 181–182 (IE), Met-196, Tyr-200, and Arg-315 contribute to the carboxy-S-adenosyl-L-methionine site.

It belongs to the class I-like SAM-binding methyltransferase superfamily. CmoB family. As to quaternary structure, homotetramer.

It catalyses the reaction carboxy-S-adenosyl-L-methionine + 5-hydroxyuridine(34) in tRNA = 5-carboxymethoxyuridine(34) in tRNA + S-adenosyl-L-homocysteine + H(+). In terms of biological role, catalyzes carboxymethyl transfer from carboxy-S-adenosyl-L-methionine (Cx-SAM) to 5-hydroxyuridine (ho5U) to form 5-carboxymethoxyuridine (cmo5U) at position 34 in tRNAs. The protein is tRNA U34 carboxymethyltransferase of Yersinia pseudotuberculosis serotype IB (strain PB1/+).